The following is a 282-amino-acid chain: Phosphate import ATP-binding protein PstB (282 aa).

Basic and acidic residues predominate over residues Met-1–Pro-10. The disordered stretch occupies residues Met-1 to Thr-24. The span at Ala-14–Thr-24 shows a compositional bias: low complexity. Positions Ile-36–Ile-277 constitute an ABC transporter domain. Position 68–75 (Gly-68–Ser-75) interacts with ATP.

The protein belongs to the ABC transporter superfamily. Phosphate importer (TC 3.A.1.7) family. The complex is composed of two ATP-binding proteins (PstB), two transmembrane proteins (PstC and PstA) and a solute-binding protein (PstS).

The protein resides in the cell inner membrane. It catalyses the reaction phosphate(out) + ATP + H2O = ADP + 2 phosphate(in) + H(+). In terms of biological role, part of the ABC transporter complex PstSACB involved in phosphate import. Responsible for energy coupling to the transport system. The protein is Phosphate import ATP-binding protein PstB of Burkholderia thailandensis (strain ATCC 700388 / DSM 13276 / CCUG 48851 / CIP 106301 / E264).